Reading from the N-terminus, the 102-residue chain is Small ribosomal subunit protein uS10 (102 aa).

This sequence belongs to the universal ribosomal protein uS10 family. Part of the 30S ribosomal subunit.

Involved in the binding of tRNA to the ribosomes. The protein is Small ribosomal subunit protein uS10 of Methylobacterium radiotolerans (strain ATCC 27329 / DSM 1819 / JCM 2831 / NBRC 15690 / NCIMB 10815 / 0-1).